The sequence spans 417 residues: NADH-quinone oxidoreductase subunit D (417 aa).

Belongs to the complex I 49 kDa subunit family. NDH-1 is composed of 14 different subunits. Subunits NuoB, C, D, E, F, and G constitute the peripheral sector of the complex.

Its subcellular location is the cell inner membrane. The enzyme catalyses a quinone + NADH + 5 H(+)(in) = a quinol + NAD(+) + 4 H(+)(out). In terms of biological role, NDH-1 shuttles electrons from NADH, via FMN and iron-sulfur (Fe-S) centers, to quinones in the respiratory chain. The immediate electron acceptor for the enzyme in this species is believed to be ubiquinone. Couples the redox reaction to proton translocation (for every two electrons transferred, four hydrogen ions are translocated across the cytoplasmic membrane), and thus conserves the redox energy in a proton gradient. The protein is NADH-quinone oxidoreductase subunit D of Dechloromonas aromatica (strain RCB).